We begin with the raw amino-acid sequence, 224 residues long: Probable mitochondrial import inner membrane translocase subunit Tim17 4 (224 aa).

The next 3 helical transmembrane spans lie at 16–36 (CGCA…LKGF), 60–80 (AIAG…CVMV), and 115–135 (AFVG…VATI).

Belongs to the Tim17/Tim22/Tim23 family. In terms of assembly, component of the TIM23 complex at least composed of Tim23, Tim17 (Tim17a1, Tim17a2 or Tim17b1) and a Tim50. The complex interacts with the Tim44 component of the PAM complex.

It is found in the mitochondrion inner membrane. Its function is as follows. Essential component of the TIM23 complex, a complex that mediates the translocation of transit peptide-containing proteins across the mitochondrial inner membrane. The protein is Probable mitochondrial import inner membrane translocase subunit Tim17 4 (Tim17a2) of Drosophila melanogaster (Fruit fly).